Here is a 103-residue protein sequence, read N- to C-terminus: Pyrimidine/purine nucleoside phosphorylase (103 aa).

Belongs to the nucleoside phosphorylase PpnP family.

The enzyme catalyses a purine D-ribonucleoside + phosphate = a purine nucleobase + alpha-D-ribose 1-phosphate. The catalysed reaction is adenosine + phosphate = alpha-D-ribose 1-phosphate + adenine. It catalyses the reaction cytidine + phosphate = cytosine + alpha-D-ribose 1-phosphate. It carries out the reaction guanosine + phosphate = alpha-D-ribose 1-phosphate + guanine. The enzyme catalyses inosine + phosphate = alpha-D-ribose 1-phosphate + hypoxanthine. The catalysed reaction is thymidine + phosphate = 2-deoxy-alpha-D-ribose 1-phosphate + thymine. It catalyses the reaction uridine + phosphate = alpha-D-ribose 1-phosphate + uracil. It carries out the reaction xanthosine + phosphate = alpha-D-ribose 1-phosphate + xanthine. In terms of biological role, catalyzes the phosphorolysis of diverse nucleosides, yielding D-ribose 1-phosphate and the respective free bases. Can use uridine, adenosine, guanosine, cytidine, thymidine, inosine and xanthosine as substrates. Also catalyzes the reverse reactions. This chain is Pyrimidine/purine nucleoside phosphorylase, found in Sulfurimonas denitrificans (strain ATCC 33889 / DSM 1251) (Thiomicrospira denitrificans (strain ATCC 33889 / DSM 1251)).